A 224-amino-acid chain; its full sequence is Protein YiiM (224 aa).

An MOSC domain is found at 26-163; it reads IQVDGELMLT…VSADAPLELV (138 aa).

Monomer.

This is Protein YiiM (yiiM) from Escherichia coli (strain K12).